Reading from the N-terminus, the 791-residue chain is von Willebrand factor A domain-containing protein 2 (791 aa).

The N-terminal stretch at 1–23 (MPPLLLLPAIYMLLFFRVSPTIS) is a signal peptide. A VWFA 1 domain is found at 51 to 221 (DILFLLDGSH…DATNGLLSTL (171 aa)). N-linked (GlcNAc...) asparagine glycosylation occurs at Asn146. One can recognise an EGF-like 1 domain in the interval 295–332 (PGPCDSQPCQNGGTCIPEGVDRYHCLCPLAFGGEVNCA). Cystine bridges form between Cys298–Cys309, Cys303–Cys319, and Cys321–Cys331. 2 consecutive VWFA domains span residues 342–516 (DVLF…QRRL) and 530–704 (DLVF…IEWL). In terms of domain architecture, EGF-like 2 spans 711-747 (PVNLCKPSPCMNEGTCVLKNGSYRCECRGGWEGPHCE). Disulfide bonds link Cys715–Cys726, Cys720–Cys735, and Cys737–Cys746. The interval 762-791 (HQEPAGLQGPTPSQQAPKHLRIGKALSSAK) is disordered.

As to quaternary structure, forms monomers and multimers. As to expression, detected in uterus, kidney, and skin. Also detected in intestine and lung of adult mice, and in calvaria, femur, brain, heart, intestine, skeletal muscle, and lung of newborn mice.

Its subcellular location is the secreted. The sequence is that of von Willebrand factor A domain-containing protein 2 (Vwa2) from Mus musculus (Mouse).